A 351-amino-acid chain; its full sequence is Histidine protein kinase SaeS (351 aa).

2 helical membrane-spanning segments follow: residues 9-29 (IIIGVVSSIPLTSTILAIAYI) and 40-60 (TLTLTTIITSCLTLLICSIFI). The 54-residue stretch at 61–114 (NPLIQKIKQFNIKTKQFANGNYASNDKTFNSPKEIYELNQSFNKMASEITQQMN) folds into the HAMP domain. One can recognise a Histidine kinase domain in the interval 129–348 (NLAHDLKTPL…TMTVTLHKLD (220 aa)). His-132 carries the post-translational modification Phosphohistidine; by autocatalysis.

Post-translationally, autophosphorylated.

The protein resides in the cell membrane. The enzyme catalyses ATP + protein L-histidine = ADP + protein N-phospho-L-histidine.. Functionally, member of the two-component regulatory system SaeR/SaeS involved in the regulation of staphylococcal virulence factors in a strain-dependent fashion. Probably functions as a membrane-associated protein kinase that upon sensing the appropriate signal, autophosphorylates and in turn activates the cytosolic response regulator SaeR. SaeR/SaeS activates the expression of exoproteins involved in adhesion and invasion of host cells, including hemolysins (hla, hlb, hlgC), coa, DNase, spa and cell wall-associated proteins (emp, eap, fnbA, fnbB, efb). Represses the expression of type 5 capsular polysaccharide (cap operon). Also modulates the expression of several other genes. The sequence is that of Histidine protein kinase SaeS (saeS) from Staphylococcus aureus (strain Newman).